A 122-amino-acid chain; its full sequence is Small ribosomal subunit protein bS6 (122 aa).

The tract at residues 95–122 is disordered; that stretch reads AETAPSPMMKEVQREEAKKAAAQSEQAA.

This sequence belongs to the bacterial ribosomal protein bS6 family.

In terms of biological role, binds together with bS18 to 16S ribosomal RNA. The polypeptide is Small ribosomal subunit protein bS6 (Ralstonia nicotianae (strain ATCC BAA-1114 / GMI1000) (Ralstonia solanacearum)).